A 497-amino-acid polypeptide reads, in one-letter code: Guanosine-5'-triphosphate,3'-diphosphate pyrophosphatase (497 aa).

Belongs to the GppA/Ppx family. GppA subfamily.

The catalysed reaction is guanosine 3'-diphosphate 5'-triphosphate + H2O = guanosine 3',5'-bis(diphosphate) + phosphate + H(+). It functions in the pathway purine metabolism; ppGpp biosynthesis; ppGpp from GTP: step 2/2. In terms of biological role, catalyzes the conversion of pppGpp to ppGpp. Guanosine pentaphosphate (pppGpp) is a cytoplasmic signaling molecule which together with ppGpp controls the 'stringent response', an adaptive process that allows bacteria to respond to amino acid starvation, resulting in the coordinated regulation of numerous cellular activities. The polypeptide is Guanosine-5'-triphosphate,3'-diphosphate pyrophosphatase (Vibrio atlanticus (strain LGP32) (Vibrio splendidus (strain Mel32))).